Here is a 375-residue protein sequence, read N- to C-terminus: Probable L-tyrosine/L-aspartate decarboxylase (375 aa).

An N6-(pyridoxal phosphate)lysine modification is found at Lys226.

The protein belongs to the group II decarboxylase family. MfnA subfamily. Pyridoxal 5'-phosphate serves as cofactor.

The enzyme catalyses L-tyrosine + H(+) = tyramine + CO2. The catalysed reaction is L-aspartate + H(+) = beta-alanine + CO2. Its pathway is cofactor biosynthesis; methanofuran biosynthesis. It functions in the pathway cofactor biosynthesis; coenzyme A biosynthesis. Functionally, catalyzes the decarboxylation of L-tyrosine to produce tyramine for methanofuran biosynthesis. Can also catalyze the decarboxylation of L-aspartate to produce beta-alanine for coenzyme A (CoA) biosynthesis. The chain is Probable L-tyrosine/L-aspartate decarboxylase from Methanocella arvoryzae (strain DSM 22066 / NBRC 105507 / MRE50).